We begin with the raw amino-acid sequence, 41 residues long: Conotoxin Bu22 (41 aa).

A propeptide spanning residues 1–25 (SDRASDGRNAAANDRASDLVALTVR) is cleaved from the precursor. 2 disulfide bridges follow: Cys27/Cys33 and Cys28/Cys40.

This sequence belongs to the conotoxin A superfamily. In terms of tissue distribution, expressed by the venom duct.

It localises to the secreted. This Conus bullatus (Bubble cone) protein is Conotoxin Bu22.